The following is a 633-amino-acid chain: Probable extracellular metalloproteinase 5 (633 aa).

A signal peptide spans 1–20; it reads MHGLLLAAAGLLSLPLHVLA. Positions 21-244 are excised as a propeptide; the sequence is HPQPSTNLAG…VHNVVDYVSH (224 aa). An N-linked (GlcNAc...) asparagine glycan is attached at N285. H428 provides a ligand contact to Zn(2+). The active site involves E429. H432 serves as a coordination point for Zn(2+). 2 N-linked (GlcNAc...) asparagine glycosylation sites follow: N592 and N621.

The protein belongs to the peptidase M36 family. It depends on Zn(2+) as a cofactor.

The protein localises to the secreted. In terms of biological role, secreted metalloproteinase probably acting as a virulence factor. The protein is Probable extracellular metalloproteinase 5 (MEP5) of Trichophyton verrucosum (strain HKI 0517).